Here is a 314-residue protein sequence, read N- to C-terminus: Acetyl-coenzyme A carboxylase carboxyl transferase subunit beta (314 aa).

The region spanning 37–307 (LWQKCPACDA…MSLPALEPTY (271 aa)) is the CoA carboxyltransferase N-terminal domain. Zn(2+) is bound by residues cysteine 41, cysteine 44, cysteine 60, and cysteine 63. The segment at 41 to 63 (CPACDALTYTKDLQQNWQVCPSC) adopts a C4-type zinc-finger fold.

This sequence belongs to the AccD/PCCB family. As to quaternary structure, acetyl-CoA carboxylase is a heterohexamer composed of biotin carboxyl carrier protein (AccB), biotin carboxylase (AccC) and two subunits each of ACCase subunit alpha (AccA) and ACCase subunit beta (AccD). Zn(2+) serves as cofactor.

The protein resides in the cytoplasm. The catalysed reaction is N(6)-carboxybiotinyl-L-lysyl-[protein] + acetyl-CoA = N(6)-biotinyl-L-lysyl-[protein] + malonyl-CoA. It participates in lipid metabolism; malonyl-CoA biosynthesis; malonyl-CoA from acetyl-CoA: step 1/1. Functionally, component of the acetyl coenzyme A carboxylase (ACC) complex. Biotin carboxylase (BC) catalyzes the carboxylation of biotin on its carrier protein (BCCP) and then the CO(2) group is transferred by the transcarboxylase to acetyl-CoA to form malonyl-CoA. The protein is Acetyl-coenzyme A carboxylase carboxyl transferase subunit beta of Synechococcus sp. (strain JA-3-3Ab) (Cyanobacteria bacterium Yellowstone A-Prime).